A 336-amino-acid chain; its full sequence is Ketol-acid reductoisomerase (NADP(+)) 1 (336 aa).

Positions 2–181 (AKVYYEKDVT…GATRAGVLET (180 aa)) constitute a KARI N-terminal Rossmann domain. NADP(+)-binding positions include 25 to 28 (YGSQ), arginine 48, serine 52, and 82 to 85 (DELQ). The active site involves histidine 107. Glycine 133 contacts NADP(+). Positions 182 to 327 (TFKEETETDL…RKLREMMPFV (146 aa)) constitute a KARI C-terminal knotted domain. 4 residues coordinate Mg(2+): aspartate 190, glutamate 194, glutamate 226, and glutamate 230. Residue serine 251 participates in substrate binding.

It belongs to the ketol-acid reductoisomerase family. Mg(2+) is required as a cofactor.

The catalysed reaction is (2R)-2,3-dihydroxy-3-methylbutanoate + NADP(+) = (2S)-2-acetolactate + NADPH + H(+). The enzyme catalyses (2R,3R)-2,3-dihydroxy-3-methylpentanoate + NADP(+) = (S)-2-ethyl-2-hydroxy-3-oxobutanoate + NADPH + H(+). It functions in the pathway amino-acid biosynthesis; L-isoleucine biosynthesis; L-isoleucine from 2-oxobutanoate: step 2/4. Its pathway is amino-acid biosynthesis; L-valine biosynthesis; L-valine from pyruvate: step 2/4. Functionally, involved in the biosynthesis of branched-chain amino acids (BCAA). Catalyzes an alkyl-migration followed by a ketol-acid reduction of (S)-2-acetolactate (S2AL) to yield (R)-2,3-dihydroxy-isovalerate. In the isomerase reaction, S2AL is rearranged via a Mg-dependent methyl migration to produce 3-hydroxy-3-methyl-2-ketobutyrate (HMKB). In the reductase reaction, this 2-ketoacid undergoes a metal-dependent reduction by NADPH to yield (R)-2,3-dihydroxy-isovalerate. The sequence is that of Ketol-acid reductoisomerase (NADP(+)) 1 from Bacillus cereus (strain ATCC 14579 / DSM 31 / CCUG 7414 / JCM 2152 / NBRC 15305 / NCIMB 9373 / NCTC 2599 / NRRL B-3711).